A 198-amino-acid chain; its full sequence is Peptidyl-tRNA hydrolase (198 aa).

A tRNA-binding site is contributed by Tyr14. The Proton acceptor role is filled by His19. Positions 64, 66, and 113 each coordinate tRNA.

It belongs to the PTH family. In terms of assembly, monomer.

The protein localises to the cytoplasm. It catalyses the reaction an N-acyl-L-alpha-aminoacyl-tRNA + H2O = an N-acyl-L-amino acid + a tRNA + H(+). Hydrolyzes ribosome-free peptidyl-tRNAs (with 1 or more amino acids incorporated), which drop off the ribosome during protein synthesis, or as a result of ribosome stalling. Its function is as follows. Catalyzes the release of premature peptidyl moieties from peptidyl-tRNA molecules trapped in stalled 50S ribosomal subunits, and thus maintains levels of free tRNAs and 50S ribosomes. The sequence is that of Peptidyl-tRNA hydrolase from Acidobacterium capsulatum (strain ATCC 51196 / DSM 11244 / BCRC 80197 / JCM 7670 / NBRC 15755 / NCIMB 13165 / 161).